A 304-amino-acid polypeptide reads, in one-letter code: MSAKSKGNPSSSSAAEGPPAASKTKVKEQIKIIVEDLELVLGDLKDVAKELKEVVDQIDTLTSDLQLEDEMTDSSKTDTLNSSSSGTTASSIEKIKEQANAPLIKPPAHPSAILTVLRKPNPPPPPPRLTPVRCEEPQRVVPTANPVKTNGTLLRNGGLAGRPNKIPNGDICCIPNSNLDKAPLQSLMHRPEKDRSPQAGPRERVRFNEKVQYHGYCPDCESRYNIKNREVHLHSEPVHPPGKIPHQGPLLHPPPHLPNFPLENGGLGISHSNSFPPPTPATVPPPAAPKPQKTILRKSTTTTV.

Positions 1–22 (MSAKSKGNPSSSSAAEGPPAAS) are enriched in low complexity. 4 disordered regions span residues 1-27 (MSAK…TKVK), 66-109 (QLED…PPAH), 114-133 (LTVL…TPVR), and 236-304 (EPVH…TTTV). Positions 33 to 70 (IVEDLELVLGDLKDVAKELKEVVDQIDTLTSDLQLEDE) form a coiled coil. Low complexity predominate over residues 77-91 (TDTLNSSSSGTTASS). 2 stretches are compositionally biased toward pro residues: residues 120–129 (PNPPPPPPRL) and 275–289 (FPPP…PAAP).

Functionally, regulator of cell size that promotes cell size increase independently of mTOR and Hippo signaling pathways. Acts by stimulating the translation of specific mRNAs, including those encoding proteins affecting mitochondrial functions. Increases mitochondrial mass and respiration. The sequence is that of Protein Largen (Prr16) from Mus musculus (Mouse).